A 143-amino-acid chain; its full sequence is Large ribosomal subunit protein uL11 (143 aa).

Belongs to the universal ribosomal protein uL11 family. Part of the ribosomal stalk of the 50S ribosomal subunit. Interacts with L10 and the large rRNA to form the base of the stalk. L10 forms an elongated spine to which L12 dimers bind in a sequential fashion forming a multimeric L10(L12)X complex. Post-translationally, one or more lysine residues are methylated.

Functionally, forms part of the ribosomal stalk which helps the ribosome interact with GTP-bound translation factors. The polypeptide is Large ribosomal subunit protein uL11 (Bifidobacterium longum (strain DJO10A)).